Reading from the N-terminus, the 488-residue chain is Inosine-5'-monophosphate dehydrogenase (488 aa).

2 CBS domains span residues 95–153 (VISN…SIKI) and 157–216 (MTQE…AKDE). Residues aspartate 250 and 300–302 (GIG) contribute to the NAD(+) site. 2 residues coordinate K(+): glycine 302 and glycine 304. IMP is bound at residue serine 305. Cysteine 307 is a K(+) binding site. Cysteine 307 acts as the Thioimidate intermediate in catalysis. Residues 340–342 (DGG), 363–364 (GS), and 387–391 (YRGMG) contribute to the IMP site. Arginine 403 (proton acceptor) is an active-site residue. Glutamate 417 serves as a coordination point for IMP. Positions 468–488 (GLAESHPHNIQITKESPNYSF) are disordered. K(+)-binding residues include glutamate 471, serine 472, and histidine 473. Over residues 475–488 (HNIQITKESPNYSF) the composition is skewed to polar residues.

It belongs to the IMPDH/GMPR family. In terms of assembly, homotetramer. K(+) is required as a cofactor.

The catalysed reaction is IMP + NAD(+) + H2O = XMP + NADH + H(+). It functions in the pathway purine metabolism; XMP biosynthesis via de novo pathway; XMP from IMP: step 1/1. Mycophenolic acid (MPA) is a non-competitive inhibitor that prevents formation of the closed enzyme conformation by binding to the same site as the amobile flap. In contrast, mizoribine monophosphate (MZP) is a competitive inhibitor that induces the closed conformation. MPA is a potent inhibitor of mammalian IMPDHs but a poor inhibitor of the bacterial enzymes. MZP is a more potent inhibitor of bacterial IMPDH. In terms of biological role, catalyzes the conversion of inosine 5'-phosphate (IMP) to xanthosine 5'-phosphate (XMP), the first committed and rate-limiting step in the de novo synthesis of guanine nucleotides, and therefore plays an important role in the regulation of cell growth. The sequence is that of Inosine-5'-monophosphate dehydrogenase from Staphylococcus aureus (strain MW2).